A 337-amino-acid chain; its full sequence is MTRLISADKSEDDLLEASLRPRALSDYVGQEKAKGNLGLFIDAARGRSEALDHVLLYGPPGLGKTTLANIIACEMGVNIKSTSGPVIERPGDLAAILTNLEAHDVLFIDEIHRLSHVVEEILYPAMEDFQLDIIIGQGPSARTIKLDLPKFTLVGATTRAGLLSSPLRDRFGVISRLEFYTHEELAFIITRSARIFGMAIAPEGAMELARRSRGTPRIANRLLRRVRDFAQVRADGVITREVADQALALLEIDDMGFDMMDRAILLTIIDKFGGGPVGLDTIAAAISEESDTIEDVYEPFLIQNGFLNRTPRGRVATAAAYRHFGRIAPEPPQGKLF.

The large ATPase domain (RuvB-L) stretch occupies residues 1-180 (MTRLISADKS…FGVISRLEFY (180 aa)). ATP is bound by residues leucine 19, arginine 20, glycine 61, lysine 64, threonine 65, threonine 66, 127–129 (EDF), arginine 170, tyrosine 180, and arginine 217. Threonine 65 lines the Mg(2+) pocket. The interval 181–251 (THEELAFIIT…VADQALALLE (71 aa)) is small ATPAse domain (RuvB-S). The segment at 254–337 (DMGFDMMDRA…APEPPQGKLF (84 aa)) is head domain (RuvB-H). 2 residues coordinate DNA: arginine 309 and arginine 314.

It belongs to the RuvB family. As to quaternary structure, homohexamer. Forms an RuvA(8)-RuvB(12)-Holliday junction (HJ) complex. HJ DNA is sandwiched between 2 RuvA tetramers; dsDNA enters through RuvA and exits via RuvB. An RuvB hexamer assembles on each DNA strand where it exits the tetramer. Each RuvB hexamer is contacted by two RuvA subunits (via domain III) on 2 adjacent RuvB subunits; this complex drives branch migration. In the full resolvosome a probable DNA-RuvA(4)-RuvB(12)-RuvC(2) complex forms which resolves the HJ.

It is found in the cytoplasm. The catalysed reaction is ATP + H2O = ADP + phosphate + H(+). Functionally, the RuvA-RuvB-RuvC complex processes Holliday junction (HJ) DNA during genetic recombination and DNA repair, while the RuvA-RuvB complex plays an important role in the rescue of blocked DNA replication forks via replication fork reversal (RFR). RuvA specifically binds to HJ cruciform DNA, conferring on it an open structure. The RuvB hexamer acts as an ATP-dependent pump, pulling dsDNA into and through the RuvAB complex. RuvB forms 2 homohexamers on either side of HJ DNA bound by 1 or 2 RuvA tetramers; 4 subunits per hexamer contact DNA at a time. Coordinated motions by a converter formed by DNA-disengaged RuvB subunits stimulates ATP hydrolysis and nucleotide exchange. Immobilization of the converter enables RuvB to convert the ATP-contained energy into a lever motion, pulling 2 nucleotides of DNA out of the RuvA tetramer per ATP hydrolyzed, thus driving DNA branch migration. The RuvB motors rotate together with the DNA substrate, which together with the progressing nucleotide cycle form the mechanistic basis for DNA recombination by continuous HJ branch migration. Branch migration allows RuvC to scan DNA until it finds its consensus sequence, where it cleaves and resolves cruciform DNA. The chain is Holliday junction branch migration complex subunit RuvB from Citrifermentans bemidjiense (strain ATCC BAA-1014 / DSM 16622 / JCM 12645 / Bem) (Geobacter bemidjiensis).